A 200-amino-acid polypeptide reads, in one-letter code: Sperm acrosome developmental regulator (200 aa).

Residue Ser63 is modified to Phosphoserine. The segment covering 167–183 (QERRRRRRMRSHASHTS) has biased composition (basic residues). Residues 167–200 (QERRRRRRMRSHASHTSRHSESVQGLKHDARSPL) are disordered. Residues 184-200 (RHSESVQGLKHDARSPL) are compositionally biased toward basic and acidic residues.

It is found in the cytoplasmic vesicle. The protein localises to the secretory vesicle. Its subcellular location is the acrosome. May play an important role in acrosome formation and nucleus shaping during spermiogenesis. This Rattus norvegicus (Rat) protein is Sperm acrosome developmental regulator (Spacdr).